The primary structure comprises 752 residues: Cation-transporting P-type ATPase B (752 aa).

The HMA domain occupies 15–78 (RRIRLDVSGM…VVEKAGYHAA (64 aa)). 2 residues coordinate a metal cation: Cys-26 and Cys-29. A run of 6 helical transmembrane segments spans residues 105–125 (LLVA…FAIV), 132–152 (GWGY…AWPF), 167–187 (METL…SSVF), 201–221 (AILN…VFVL), 361–381 (IAGV…AAWL), and 390–410 (AFSV…GLAT). Catalysis depends on Asp-446, which acts as the 4-aspartylphosphate intermediate. A helical transmembrane segment spans residues 714-734 (AIPIAAAGLLNPLIAGAAMAF).

Belongs to the cation transport ATPase (P-type) (TC 3.A.3) family. Type IB subfamily.

Its subcellular location is the cell membrane. It catalyses the reaction ATP + H2O = ADP + phosphate + H(+). In Mycobacterium bovis (strain ATCC BAA-935 / AF2122/97), this protein is Cation-transporting P-type ATPase B (ctpB).